Here is a 111-residue protein sequence, read N- to C-terminus: T cell receptor beta variable 30 (111 aa).

A signal peptide spans 1–18; it reads MLCSLLALLLGTFFGVRS. Positions 19-111 constitute an Ig-like domain; that stretch reads QTIHQWPATL…DSGFYLCAWS (93 aa). C40 and C108 are disulfide-bonded. Residue N80 is glycosylated (N-linked (GlcNAc...) asparagine).

Alpha-beta TR is a heterodimer composed of an alpha and beta chain; disulfide-linked. The alpha-beta TR is associated with the transmembrane signaling CD3 coreceptor proteins to form the TR-CD3 (TcR or TCR). The assembly of alpha-beta TR heterodimers with CD3 occurs in the endoplasmic reticulum where a single alpha-beta TR heterodimer associates with one CD3D-CD3E heterodimer, one CD3G-CD3E heterodimer and one CD247 homodimer forming a stable octameric structure. CD3D-CD3E and CD3G-CD3E heterodimers preferentially associate with TR alpha and TR beta chains, respectively. The association of the CD247 homodimer is the last step of TcR assembly in the endoplasmic reticulum and is required for transport to the cell surface.

It localises to the cell membrane. Functionally, v region of the variable domain of T cell receptor (TR) beta chain that participates in the antigen recognition. Alpha-beta T cell receptors are antigen specific receptors which are essential to the immune response and are present on the cell surface of T lymphocytes. Recognize peptide-major histocompatibility (MH) (pMH) complexes that are displayed by antigen presenting cells (APC), a prerequisite for efficient T cell adaptive immunity against pathogens. Binding of alpha-beta TR to pMH complex initiates TR-CD3 clustering on the cell surface and intracellular activation of LCK that phosphorylates the ITAM motifs of CD3G, CD3D, CD3E and CD247 enabling the recruitment of ZAP70. In turn ZAP70 phosphorylates LAT, which recruits numerous signaling molecules to form the LAT signalosome. The LAT signalosome propagates signal branching to three major signaling pathways, the calcium, the mitogen-activated protein kinase (MAPK) kinase and the nuclear factor NF-kappa-B (NF-kB) pathways, leading to the mobilization of transcription factors that are critical for gene expression and essential for T cell growth and differentiation. The T cell repertoire is generated in the thymus, by V-(D)-J rearrangement. This repertoire is then shaped by intrathymic selection events to generate a peripheral T cell pool of self-MH restricted, non-autoaggressive T cells. Post-thymic interaction of alpha-beta TR with the pMH complexes shapes TR structural and functional avidity. This chain is T cell receptor beta variable 30, found in Homo sapiens (Human).